The following is a 105-amino-acid chain: UPF0145 protein OEOE_0637 (105 aa).

Belongs to the UPF0145 family.

The chain is UPF0145 protein OEOE_0637 from Oenococcus oeni (strain ATCC BAA-331 / PSU-1).